A 358-amino-acid polypeptide reads, in one-letter code: L-Ala-D/L-Glu epimerase (358 aa).

Substrate contacts are provided by R24, T135, and K160. K162 functions as the Proton acceptor; specific for (R)-substrate epimerization in the catalytic mechanism. The Mg(2+) site is built by D190, E218, and D243. Catalysis depends on K267, which acts as the Proton acceptor; specific for (S)-substrate epimerization. Residues C295, D320, and D322 each contribute to the substrate site.

Belongs to the mandelate racemase/muconate lactonizing enzyme family. Mg(2+) serves as cofactor.

The enzyme catalyses L-alanyl-L-glutamate = L-alanyl-D-glutamate. Its pathway is cell wall degradation; peptidoglycan degradation. Its function is as follows. Catalyzes the epimerization of L-Ala-D-Glu to L-Ala-L-Glu and has probably a role in the metabolism of the murein peptide, of which L-Ala-D-Glu is a component. Is also able to catalyze the epimerization of L-Ala-D-Asp. The chain is L-Ala-D/L-Glu epimerase from Clostridium acetobutylicum (strain ATCC 824 / DSM 792 / JCM 1419 / IAM 19013 / LMG 5710 / NBRC 13948 / NRRL B-527 / VKM B-1787 / 2291 / W).